A 35-amino-acid polypeptide reads, in one-letter code: METNYLGLLATILVILVPSIFLVILYVQTSSKSES.

A helical membrane pass occupies residues 7–27; it reads GLLATILVILVPSIFLVILYV.

The protein belongs to the PsbM family. In terms of assembly, PSII is composed of 1 copy each of membrane proteins PsbA, PsbB, PsbC, PsbD, PsbE, PsbF, PsbH, PsbI, PsbJ, PsbK, PsbL, PsbM, PsbT, PsbX, PsbY, PsbZ, Psb30/Ycf12, peripheral proteins PsbO, CyanoQ (PsbQ), PsbU, PsbV and a large number of cofactors. It forms dimeric complexes.

It localises to the cellular thylakoid membrane. In terms of biological role, one of the components of the core complex of photosystem II (PSII). PSII is a light-driven water:plastoquinone oxidoreductase that uses light energy to abstract electrons from H(2)O, generating O(2) and a proton gradient subsequently used for ATP formation. It consists of a core antenna complex that captures photons, and an electron transfer chain that converts photonic excitation into a charge separation. This subunit is found at the monomer-monomer interface. The sequence is that of Photosystem II reaction center protein M from Synechococcus sp. (strain JA-3-3Ab) (Cyanobacteria bacterium Yellowstone A-Prime).